A 658-amino-acid polypeptide reads, in one-letter code: Probable rhamnogalacturonate lyase B (658 aa).

Residues 1–19 (MRFAIPLGAACAWAGVALA) form the signal peptide. N-linked (GlcNAc...) asparagine glycans are attached at residues asparagine 110, asparagine 143, asparagine 239, asparagine 280, asparagine 522, asparagine 530, asparagine 592, and asparagine 633.

It belongs to the polysaccharide lyase 4 family.

Its subcellular location is the secreted. The catalysed reaction is Endotype eliminative cleavage of L-alpha-rhamnopyranosyl-(1-&gt;4)-alpha-D-galactopyranosyluronic acid bonds of rhamnogalacturonan I domains in ramified hairy regions of pectin leaving L-rhamnopyranose at the reducing end and 4-deoxy-4,5-unsaturated D-galactopyranosyluronic acid at the non-reducing end.. In terms of biological role, pectinolytic enzymes consist of four classes of enzymes: pectin lyase, polygalacturonase, pectin methylesterase and rhamnogalacturonase. Degrades the rhamnogalacturonan I (RG-I) backbone of pectin. The protein is Probable rhamnogalacturonate lyase B (rglB) of Aspergillus fumigatus (strain CBS 144.89 / FGSC A1163 / CEA10) (Neosartorya fumigata).